The primary structure comprises 793 residues: DNA mismatch repair protein MutS (793 aa).

589–596 is a binding site for ATP; sequence GPNMSGKS.

It belongs to the DNA mismatch repair MutS family.

This protein is involved in the repair of mismatches in DNA. It is possible that it carries out the mismatch recognition step. This protein has a weak ATPase activity. In Thermotoga sp. (strain RQ2), this protein is DNA mismatch repair protein MutS.